Consider the following 431-residue polypeptide: Protein translocase subunit SecY 1 (431 aa).

Transmembrane regions (helical) follow at residues 18–38, 67–87, 115–135, 150–170, 178–198, 215–235, 268–288, 312–332, 365–385, and 392–412; these read IYFT…TVPG, YSIF…IQLL, YLTL…FNAL, VEIA…GDEI, GVSV…LYQI, ILFF…VTWV, VIPV…LMAF, GVII…FVQV, LIKL…LPQL, and LPSS…VVLE.

Belongs to the SecY/SEC61-alpha family. In terms of assembly, component of the Sec protein translocase complex. Heterotrimer consisting of SecY, SecE and SecG subunits. The heterotrimers can form oligomers, although 1 heterotrimer is thought to be able to translocate proteins. Interacts with the ribosome. Interacts with SecDF, and other proteins may be involved. Interacts with SecA.

The protein resides in the cell membrane. Functionally, the central subunit of the protein translocation channel SecYEG. Consists of two halves formed by TMs 1-5 and 6-10. These two domains form a lateral gate at the front which open onto the bilayer between TMs 2 and 7, and are clamped together by SecE at the back. The channel is closed by both a pore ring composed of hydrophobic SecY resides and a short helix (helix 2A) on the extracellular side of the membrane which forms a plug. The plug probably moves laterally to allow the channel to open. The ring and the pore may move independently. This is Protein translocase subunit SecY 1 from Lactobacillus kefiranofaciens subsp. kefiranofaciens.